Here is a 130-residue protein sequence, read N- to C-terminus: Small ribosomal subunit protein uS11 (130 aa).

This sequence belongs to the universal ribosomal protein uS11 family. As to quaternary structure, part of the 30S ribosomal subunit. Interacts with proteins S7 and S18. Binds to IF-3.

In terms of biological role, located on the platform of the 30S subunit, it bridges several disparate RNA helices of the 16S rRNA. Forms part of the Shine-Dalgarno cleft in the 70S ribosome. This chain is Small ribosomal subunit protein uS11, found in Lactobacillus helveticus (strain DPC 4571).